The primary structure comprises 353 residues: Quinolinate synthase (353 aa).

Iminosuccinate-binding residues include His-49 and Ser-70. Cys-115 lines the [4Fe-4S] cluster pocket. Iminosuccinate contacts are provided by residues 141–143 (YAN) and Ser-158. [4Fe-4S] cluster is bound at residue Cys-202. Residues 228 to 230 (HPE) and Thr-245 each bind iminosuccinate. Residue Cys-299 coordinates [4Fe-4S] cluster.

The protein belongs to the quinolinate synthase family. Type 1 subfamily. [4Fe-4S] cluster serves as cofactor.

Its subcellular location is the cytoplasm. The catalysed reaction is iminosuccinate + dihydroxyacetone phosphate = quinolinate + phosphate + 2 H2O + H(+). It participates in cofactor biosynthesis; NAD(+) biosynthesis; quinolinate from iminoaspartate: step 1/1. Catalyzes the condensation of iminoaspartate with dihydroxyacetone phosphate to form quinolinate. The polypeptide is Quinolinate synthase (Hahella chejuensis (strain KCTC 2396)).